A 701-amino-acid chain; its full sequence is Nucleolar transcription factor 1-B (701 aa).

The tract at residues 1-21 is disordered; it reads MNGAAGGDTQGKMTAPKDQDQ. DNA-binding regions (HMG box) lie at residues 112–180, 196–264, 298–362, 422–489, and 508–574; these read PKKP…AKFR, PEKP…REYM, TKPP…MRFL, PETP…SDMR, and KKAP…DTWM. A disordered region spans residues 382–426; sequence MKRKRTNTPASKMATEDAAKVKSRSGQADKKKAAEERAKLPETPK. The segment covering 408-426 has biased composition (basic and acidic residues); that stretch reads QADKKKAAEERAKLPETPK. The tract at residues 584 to 701 is disordered; sequence AYKEQNTNKR…SADSSDSDSN (118 aa). Residues 597–612 show a composition bias toward polar residues; that stretch reads TKIQAPSSKSKLVIQS. Residues 615 to 682 show a composition bias toward acidic residues; it reads DDDEDDEDDE…DNEEDDDDNE (68 aa). A compositionally biased stretch (low complexity) spans 683 to 695; the sequence is SGSSSSSSSSADS.

As to quaternary structure, XUBF consists of 2 polypeptides of 82 and 85 kDa, encoded by the same or closely related genes.

The protein localises to the nucleus. In terms of biological role, UBF recognizes the ribosomal RNA gene promotor and activates transcription mediated by RNA polymerase I through cooperative interactions with the species-specific factor SL1. It binds specifically to the upstream control element. This Xenopus laevis (African clawed frog) protein is Nucleolar transcription factor 1-B (ubtf-b).